Consider the following 177-residue polypeptide: MASPATSSAVLVVVLVATLAAGGANAATFTITNRCSFTVWPAATPVGGGVQLSPGQTWTINVPAGTSSGRVWGRTGCSFDGSGRGSCATGDCAGALSCTLSGQKPLTLAEFTIGGSQDFYDLSVIDGYNVAMSFSCSSGVTVTCRDSRCPDAYLFPEDNTKTHACSGNSNYQVVFCP.

Residues M1 to A26 form the signal peptide.

This sequence belongs to the thaumatin family.

Its subcellular location is the secreted. The sequence is that of Thaumatin-like protein from Oryza sativa subsp. japonica (Rice).